We begin with the raw amino-acid sequence, 277 residues long: UBX domain-containing protein 8 (277 aa).

Residue Met-1 is a topological domain, cytoplasmic. Residues 2-22 (ASRGVVGLFLLSALPLLCLEL) form a helical membrane-spanning segment. Topologically, residues 23–33 (RRGIPSLGIKD) are lumenal. A helical membrane pass occupies residues 34–54 (LILLSGRIFLLLALLTLVISV). Residues 55–277 (TTSWFNSLKP…NVEEKEQSSQ (223 aa)) lie on the Cytoplasmic side of the membrane. The disordered stretch occupies residues 64–89 (PSQGHLKEGEKENEKRRRLVRERQQE). Over residues 68–89 (HLKEGEKENEKRRRLVRERQQE) the composition is skewed to basic and acidic residues. A UBX domain is found at 193–269 (TAEEVVTVAL…GITVDTVLNV (77 aa)).

In terms of assembly, interacts with SYVN1 and VCP. In terms of tissue distribution, highly expressed in gonads. In testis, expressed in post-meiotic round spermatids, while in ovaries it is expressed in granulosa cells.

It is found in the endoplasmic reticulum membrane. Involved in endoplasmic reticulum-associated degradation (ERAD) for misfolded lumenal proteins, possibly by tethering VCP to the endoplasmic reticulum membrane. May play a role in reproduction. The polypeptide is UBX domain-containing protein 8 (Ubxn8) (Mus musculus (Mouse)).